The sequence spans 511 residues: Probable DNA ligase (511 aa).

Position 209 (Glu209) interacts with ATP. Catalysis depends on Lys211, which acts as the N6-AMP-lysine intermediate. Residues Arg216, Arg231, Glu260, Phe299, Arg371, and Lys377 each coordinate ATP.

Belongs to the ATP-dependent DNA ligase family. The cofactor is Mg(2+).

The catalysed reaction is ATP + (deoxyribonucleotide)n-3'-hydroxyl + 5'-phospho-(deoxyribonucleotide)m = (deoxyribonucleotide)n+m + AMP + diphosphate.. Functionally, DNA ligase that seals nicks in double-stranded DNA during DNA replication, DNA recombination and DNA repair. The polypeptide is Probable DNA ligase (Mycolicibacterium gilvum (strain PYR-GCK) (Mycobacterium gilvum (strain PYR-GCK))).